A 128-amino-acid polypeptide reads, in one-letter code: Sulfurtransferase TusD (128 aa).

The active-site Cysteine persulfide intermediate is C78.

This sequence belongs to the DsrE/TusD family. In terms of assembly, heterohexamer, formed by a dimer of trimers. The hexameric TusBCD complex contains 2 copies each of TusB, TusC and TusD. The TusBCD complex interacts with TusE.

The protein localises to the cytoplasm. Part of a sulfur-relay system required for 2-thiolation of 5-methylaminomethyl-2-thiouridine (mnm(5)s(2)U) at tRNA wobble positions. Accepts sulfur from TusA and transfers it in turn to TusE. The sequence is that of Sulfurtransferase TusD from Escherichia coli O45:K1 (strain S88 / ExPEC).